An 88-amino-acid polypeptide reads, in one-letter code: Small ribosomal subunit protein bS16 (88 aa).

Belongs to the bacterial ribosomal protein bS16 family.

This Geotalea uraniireducens (strain Rf4) (Geobacter uraniireducens) protein is Small ribosomal subunit protein bS16.